A 206-amino-acid polypeptide reads, in one-letter code: Thiamine-phosphate synthase (206 aa).

Residues 33-37 (QMRFK) and Asn65 contribute to the 4-amino-2-methyl-5-(diphosphooxymethyl)pyrimidine site. Mg(2+) contacts are provided by Asp66 and Asp85. Thr104 is a 4-amino-2-methyl-5-(diphosphooxymethyl)pyrimidine binding site. 130-132 (TAT) is a binding site for 2-[(2R,5Z)-2-carboxy-4-methylthiazol-5(2H)-ylidene]ethyl phosphate. Residue Lys133 participates in 4-amino-2-methyl-5-(diphosphooxymethyl)pyrimidine binding. Residue Gly166 coordinates 2-[(2R,5Z)-2-carboxy-4-methylthiazol-5(2H)-ylidene]ethyl phosphate.

Belongs to the thiamine-phosphate synthase family. It depends on Mg(2+) as a cofactor.

The catalysed reaction is 2-[(2R,5Z)-2-carboxy-4-methylthiazol-5(2H)-ylidene]ethyl phosphate + 4-amino-2-methyl-5-(diphosphooxymethyl)pyrimidine + 2 H(+) = thiamine phosphate + CO2 + diphosphate. The enzyme catalyses 2-(2-carboxy-4-methylthiazol-5-yl)ethyl phosphate + 4-amino-2-methyl-5-(diphosphooxymethyl)pyrimidine + 2 H(+) = thiamine phosphate + CO2 + diphosphate. It catalyses the reaction 4-methyl-5-(2-phosphooxyethyl)-thiazole + 4-amino-2-methyl-5-(diphosphooxymethyl)pyrimidine + H(+) = thiamine phosphate + diphosphate. It participates in cofactor biosynthesis; thiamine diphosphate biosynthesis; thiamine phosphate from 4-amino-2-methyl-5-diphosphomethylpyrimidine and 4-methyl-5-(2-phosphoethyl)-thiazole: step 1/1. Functionally, condenses 4-methyl-5-(beta-hydroxyethyl)thiazole monophosphate (THZ-P) and 2-methyl-4-amino-5-hydroxymethyl pyrimidine pyrophosphate (HMP-PP) to form thiamine monophosphate (TMP). The chain is Thiamine-phosphate synthase from Flavobacterium psychrophilum (strain ATCC 49511 / DSM 21280 / CIP 103535 / JIP02/86).